Consider the following 110-residue polypeptide: Thiosulfate sulfurtransferase GlpE (110 aa).

Residues 17 to 105 form the Rhodanese domain; the sequence is RENGAQVVDI…WRSVYPADTS (89 aa). C65 (cysteine persulfide intermediate) is an active-site residue.

This sequence belongs to the GlpE family.

It is found in the cytoplasm. It catalyses the reaction thiosulfate + hydrogen cyanide = thiocyanate + sulfite + 2 H(+). The catalysed reaction is thiosulfate + [thioredoxin]-dithiol = [thioredoxin]-disulfide + hydrogen sulfide + sulfite + 2 H(+). Transferase that catalyzes the transfer of sulfur from thiosulfate to thiophilic acceptors such as cyanide or dithiols. May function in a CysM-independent thiosulfate assimilation pathway by catalyzing the conversion of thiosulfate to sulfite, which can then be used for L-cysteine biosynthesis. In Pseudomonas aeruginosa (strain ATCC 15692 / DSM 22644 / CIP 104116 / JCM 14847 / LMG 12228 / 1C / PRS 101 / PAO1), this protein is Thiosulfate sulfurtransferase GlpE.